Reading from the N-terminus, the 223-residue chain is Urease accessory protein UreF (223 aa).

It belongs to the UreF family. In terms of assembly, ureD, UreF and UreG form a complex that acts as a GTP-hydrolysis-dependent molecular chaperone, activating the urease apoprotein by helping to assemble the nickel containing metallocenter of UreC. The UreE protein probably delivers the nickel.

The protein localises to the cytoplasm. Functionally, required for maturation of urease via the functional incorporation of the urease nickel metallocenter. In Rhizobium leguminosarum bv. viciae, this protein is Urease accessory protein UreF.